We begin with the raw amino-acid sequence, 784 residues long: Ent-kaurene synthase 1, chloroplastic (784 aa).

Residues 1-28 (MNLSLCIASPLLTKSSRPTALSAIHTAS) constitute a chloroplast transit peptide. Residues D528, D532, N672, and E680 each coordinate Mg(2+). Residues 528 to 532 (DDFFD) carry the DDXXD motif motif.

Belongs to the terpene synthase family. Mg(2+) serves as cofactor. In terms of tissue distribution, accumulates in leaves.

It localises to the plastid. It is found in the chloroplast. The enzyme catalyses ent-copalyl diphosphate = ent-kaur-16-ene + diphosphate. It functions in the pathway secondary metabolite biosynthesis; terpenoid biosynthesis. Its pathway is plant hormone biosynthesis; gibberellin biosynthesis. Involved in the biosynthesis of ent-kaurene diterpenoids natural products such as oridonin, miltiradiene, eriocalyxin B and nezukol, known to exhibit antitumor, anti-inflammatory and antibacterial activities, and in the production of gibberellins phytohormones. Catalyzes the conversion of ent-copalyl diphosphate (ent-CPP) to ent-kaurene. The protein is Ent-kaurene synthase 1, chloroplastic of Stevia rebaudiana (Stevia).